The chain runs to 684 residues: TBC1 domain family member 12 (684 aa).

Disordered regions lie at residues 1 to 41 (MVGP…RQTD), 119 to 138 (VPSP…SSSP), 169 to 202 (TFEG…DGDR), and 219 to 290 (KRTK…SQST). Residues 25-34 (AADEEEGEGE) show a composition bias toward acidic residues. Positions 129–138 (SPISSSSSSP) are enriched in low complexity. Composition is skewed to basic and acidic residues over residues 172–183 (GSRRQSAPDHLA) and 240–250 (PPRETAQKDSK). A coiled-coil region spans residues 331-365 (EMVAEAKKREVKEAQRRKKLMKERIRQEENIASAM). The region spanning 392 to 602 (GLPPSIRGKV…RVWDVFCRDG (211 aa)) is the Rab-GAP TBC domain.

Functionally, may act as a GTPase-activating protein for Rab family protein(s). This is TBC1 domain family member 12 (tbc1d12) from Xenopus tropicalis (Western clawed frog).